A 199-amino-acid chain; its full sequence is uncharacterized protein (199 aa).

The G-patch domain maps to 112-160; it reads PKSLGYRVLSQYGWSPQGDTAGLGLENQGRRAPVRAFRVKNDTIGLGTK.

This is an uncharacterized protein from Schizosaccharomyces pombe (strain 972 / ATCC 24843) (Fission yeast).